The following is a 301-amino-acid chain: uncharacterized protein (301 aa).

The protein belongs to the asfivirus E301R family. Interacts with host IRF3.

Plays a role in the inhibition of host innate immune system by acting as a negatively regulator of type I interferon production. Mechanistically, interacts with and prevents host IRF3 nuclear localization to inhibit its transcriptional activity. This is an uncharacterized protein from African swine fever virus (isolate Warthog/Namibia/Wart80/1980) (ASFV).